A 334-amino-acid polypeptide reads, in one-letter code: E3 ubiquitin-protein ligase ATL4 (334 aa).

Positions 1-20 are disordered; the sequence is MESLINPSHGGGNYDSHSSS. The helical transmembrane segment at 28–48 threads the bilayer; sequence VLVIILILLMTLLISVSICFL. The RING-type; atypical zinc finger occupies 117 to 159; it reads CAVCLSKFEPEDQLRLLPLCCHAFHADCIDIWLVSNQTCPLCR.

Belongs to the RING-type zinc finger family. ATL subfamily.

Its subcellular location is the membrane. It catalyses the reaction S-ubiquitinyl-[E2 ubiquitin-conjugating enzyme]-L-cysteine + [acceptor protein]-L-lysine = [E2 ubiquitin-conjugating enzyme]-L-cysteine + N(6)-ubiquitinyl-[acceptor protein]-L-lysine.. The protein operates within protein modification; protein ubiquitination. Its function is as follows. E3 ubiquitin-protein ligase able to catalyze polyubiquitination with ubiquitin-conjugating enzyme E2 UBC8 in vitro. This chain is E3 ubiquitin-protein ligase ATL4, found in Arabidopsis thaliana (Mouse-ear cress).